Reading from the N-terminus, the 28-residue chain is Dermaseptin-2.2TR (28 aa).

As to expression, expressed by the skin glands.

It localises to the secreted. In terms of biological role, has antimicrobial activity. The polypeptide is Dermaseptin-2.2TR (Phyllomedusa trinitatis (Trinidad leaf frog)).